The primary structure comprises 196 residues: Lipoprotein signal peptidase (196 aa).

Helical transmembrane passes span 75-95 (IVFL…MMSS) and 97-117 (TIGG…NLID). Active-site residues include Asp-126 and Asp-144. A helical transmembrane segment spans residues 135–155 (YSFPVFNLADCFITLGVIILV).

The protein belongs to the peptidase A8 family.

The protein localises to the cell inner membrane. The catalysed reaction is Release of signal peptides from bacterial membrane prolipoproteins. Hydrolyzes -Xaa-Yaa-Zaa-|-(S,diacylglyceryl)Cys-, in which Xaa is hydrophobic (preferably Leu), and Yaa (Ala or Ser) and Zaa (Gly or Ala) have small, neutral side chains.. Its pathway is protein modification; lipoprotein biosynthesis (signal peptide cleavage). Functionally, this protein specifically catalyzes the removal of signal peptides from prolipoproteins. This Rickettsia bellii (strain OSU 85-389) protein is Lipoprotein signal peptidase.